A 302-amino-acid polypeptide reads, in one-letter code: O-antigen biosynthesis glycosyltransferase WbnK (302 aa).

This sequence belongs to the glycosyltransferase 11 family.

The catalysed reaction is beta-D-Gal-(1-&gt;3)-alpha-D-GalNAc-(1-&gt;3)-alpha-D-GalNAc-di-trans,octa-cis-undecaprenyl diphosphate + GDP-beta-L-fucose = alpha-L-Fuc-(1-&gt;2)-beta-D-Gal-(1-&gt;3)-alpha-D-GalNAc-(1-&gt;3)-alpha-D-GalNAc-di-trans,octa-cis-undecaprenyl diphosphate + GDP + H(+). It functions in the pathway bacterial outer membrane biogenesis; LPS O-antigen biosynthesis. In terms of biological role, involved in the assembly of the O-repeating unit during O-antigen biosynthesis. This chain is O-antigen biosynthesis glycosyltransferase WbnK, found in Escherichia coli.